The following is a 782-amino-acid chain: DNA repair and recombination protein RAD54-like (782 aa).

Residues 1–20 are compositionally biased toward polar residues; the sequence is MRRSLAPSQRGGQRLSSRND. A disordered region spans residues 1–28; it reads MRRSLAPSQRGGQRLSSRNDFTPPLLKK. Residues 2-9 are required for chromatin remodeling, strand pairing activities and coupling of ATPase activity; that stretch reads RRSLAPSQ. Thr22 bears the Phosphothreonine mark. The Helicase ATP-binding domain occupies 168–343; it reads EGKRGNFNGC…FSLVNFVNPE (176 aa). An ATP-binding site is contributed by 181 to 188; it reads DEMGLGKT. The DEGH box motif lies at 294–297; sequence DEGH. The Helicase C-terminal domain maps to 501–658; it reads LLDFMLAAIR…NNESAEKHFT (158 aa). Residues 741-753 show a composition bias toward polar residues; sequence SQKIETTPATETS. Residues 741–782 are disordered; it reads SQKIETTPATETSVEAKPEPERRKRPAMPLSDDSADEDFQGF. Residues 773-782 are compositionally biased toward acidic residues; sequence DSADEDFQGF.

Belongs to the SNF2/RAD54 helicase family. Interacts (via N-terminus) with spn-A/Rad51.

The protein localises to the nucleus. Its function is as follows. Involved in mitotic DNA repair and meiotic recombination. Functions in the recombinational DNA repair pathway. Essential for interhomolog gene conversion (GC), but may have a less important role in intersister GC than spn-A/Rad51. In the presence of DNA, spn-A/Rad51 enhances the ATPase activity of okr/Rad54. The protein is DNA repair and recombination protein RAD54-like of Drosophila pseudoobscura pseudoobscura (Fruit fly).